Here is a 529-residue protein sequence, read N- to C-terminus: Protein PNS1 (529 aa).

The disordered stretch occupies residues 1–58 (MSQQYSYGGGGGAGYPPPQMQPPNSYAQANYQGQPQGAQNQYYNGQQPHHNAPQQYYG). At 1 to 84 (MSQQYSYGGG…LQPKPKFRDP (84 aa)) the chain is on the cytoplasmic side. The segment covering 22-48 (PPNSYAQANYQGQPQGAQNQYYNGQQP) has biased composition (low complexity). A helical transmembrane segment spans residues 85–105 (IFLVLFLLVFAGFIALSVICL). Residues 106-132 (RSYSNADVNVSIGRANVAGSTLNGHTA) are Extracellular-facing. Asn114 carries an N-linked (GlcNAc...) asparagine glycan. A helical membrane pass occupies residues 133 to 153 (IMFMICCAVALVLSFVYILLV). The Cytoplasmic segment spans residues 154-158 (RTFPK). A helical membrane pass occupies residues 159–179 (IILEATLLLTTLSNVAFCVYL). The Extracellular segment spans residues 180 to 184 (WVRGN). Residues 185–205 (TAAAIIFTIFAVLSVIAYFFM) form a helical membrane-spanning segment. The Cytoplasmic segment spans residues 206–230 (RKRIPLAKLILVTVIRTAEQYKSVY). The chain crosses the membrane as a helical span at residues 231 to 251 (VVALGGLIVETAFSAWTSWVV). Topologically, residues 252–271 (VAAYQRFEPSGQAAGSSSSN) are extracellular. Residue Asn271 is glycosylated (N-linked (GlcNAc...) asparagine). A helical transmembrane segment spans residues 272–292 (ASIIGIMVFIVFAYYWISEVI). Residues 293-294 (KN) are Cytoplasmic-facing. The chain crosses the membrane as a helical span at residues 295-315 (IAFTTVAGIFGVAYYNANKVA). Over 316 to 325 (NAAWGAFRRS) the chain is Extracellular. A helical transmembrane segment spans residues 326-346 (MTYSLGSICFGSLIVAILDLL). Residues 347 to 362 (RALFNILQSQAASDGD) are Cytoplasmic-facing. Residues 363 to 383 (MTGQILACVAGCCVSCIQGLV) form a helical membrane-spanning segment. Residues 384–427 (DYFNRYAYINIALYGNGYITAAKETWALLKDRGIDAIINDSLVN) lie on the Extracellular side of the membrane. An N-linked (GlcNAc...) asparagine glycan is attached at Asn422. Residues 428 to 448 (IVFNCGAFIIGLLTALFAFIY) form a helical membrane-spanning segment. Topologically, residues 449-464 (EQLTNPRYLQNDAGYY) are cytoplasmic. The helical transmembrane segment at 465-485 (SIVLLVAFGLGFNIALSVGAG) threads the bilayer. Residues 486 to 529 (SIASGVSTYFVALAEDPYILQGKNPELFEMIRQQYPQVVQGVNH) lie on the Extracellular side of the membrane.

This sequence belongs to the CTL (choline transporter-like) family.

The protein resides in the cell membrane. Its function is as follows. Probably involved in transport through the plasma membrane. The protein is Protein PNS1 (PNS1) of Mycosarcoma maydis (Corn smut fungus).